A 450-amino-acid chain; its full sequence is Glucose-6-phosphate isomerase (450 aa).

Glu289 functions as the Proton donor in the catalytic mechanism. Residues His310 and Lys424 contribute to the active site.

This sequence belongs to the GPI family.

The protein localises to the cytoplasm. The catalysed reaction is alpha-D-glucose 6-phosphate = beta-D-fructose 6-phosphate. Its pathway is carbohydrate biosynthesis; gluconeogenesis. The protein operates within carbohydrate degradation; glycolysis; D-glyceraldehyde 3-phosphate and glycerone phosphate from D-glucose: step 2/4. Functionally, catalyzes the reversible isomerization of glucose-6-phosphate to fructose-6-phosphate. The chain is Glucose-6-phosphate isomerase from Leptospira biflexa serovar Patoc (strain Patoc 1 / Ames).